Reading from the N-terminus, the 468-residue chain is WD repeat-containing protein 55 homolog (468 aa).

A disordered region spans residues 1–107; the sequence is MRNFNSPKFG…VPKRVIDDYD (107 aa). Composition is skewed to acidic residues over residues 15–26, 41–58, and 67–91; these read DDSDDDDFDSGT, PITEEIEEIEGDDEEYNP, and SDDEDDSDDSDSDKEQENGGEDGED. 6 WD repeats span residues 134–173, 178–217, 221–259, 262–301, 304–343, and 388–427; these read KTEDFVTDLCFHPDQDLLAVGTTTGDVIVYKFTNDECTIV, THTKSVRDVEFNADGDLLISTARDRSIMVTDVETGKLKRF, AHEEPVYTMSMITEHTFATGDDGGVLKLWDLRQKDPVFK, EVEDFISCIITNEQKKYLLMTSGDGYLTTINIPQRKMYVQ, PYEEELTCMGVFRRDSKLVVGSSKGNFYTFNWGQFGYHCD, and QHSLAVETMDINSTGELIASSSHDNDIRFWNIKYFEEFDD.

The protein belongs to the WD repeat WDR55 family.

The chain is WD repeat-containing protein 55 homolog from Aedes aegypti (Yellowfever mosquito).